Consider the following 199-residue polypeptide: FMN-dependent NADH:quinone oxidoreductase 2 (199 aa).

FMN is bound by residues Ser10, 16-18, and 96-99; these read SVS and MYNF.

Belongs to the azoreductase type 1 family. Homodimer. The cofactor is FMN.

The enzyme catalyses 2 a quinone + NADH + H(+) = 2 a 1,4-benzosemiquinone + NAD(+). The catalysed reaction is N,N-dimethyl-1,4-phenylenediamine + anthranilate + 2 NAD(+) = 2-(4-dimethylaminophenyl)diazenylbenzoate + 2 NADH + 2 H(+). Its function is as follows. Quinone reductase that provides resistance to thiol-specific stress caused by electrophilic quinones. Functionally, also exhibits azoreductase activity. Catalyzes the reductive cleavage of the azo bond in aromatic azo compounds to the corresponding amines. In Pseudomonas fluorescens (strain ATCC BAA-477 / NRRL B-23932 / Pf-5), this protein is FMN-dependent NADH:quinone oxidoreductase 2.